Here is a 214-residue protein sequence, read N- to C-terminus: Adenylate kinase (214 aa).

Residue 12–17 (GVGKGT) participates in ATP binding. Residues 32–61 (STGNIFRSQIASNSELGIKLKEIVESGGYV) form an NMP region. AMP is bound by residues Thr-33, Arg-38, 59-61 (GYV), 88-91 (GYPR), and Gln-95. The interval 126–163 (GRRICPSCNAQYHIYFKKSKLDTKCEIDQSELIQRKDD) is LID. Residue Arg-127 participates in ATP binding. Zn(2+) is bound by residues Cys-130, Cys-133, Cys-150, and Asp-153. 2 residues coordinate AMP: Arg-160 and Arg-171. Residue Lys-199 coordinates ATP.

It belongs to the adenylate kinase family. In terms of assembly, monomer.

The protein resides in the cytoplasm. It catalyses the reaction AMP + ATP = 2 ADP. The protein operates within purine metabolism; AMP biosynthesis via salvage pathway; AMP from ADP: step 1/1. Its function is as follows. Catalyzes the reversible transfer of the terminal phosphate group between ATP and AMP. Plays an important role in cellular energy homeostasis and in adenine nucleotide metabolism. In Mycoplasmopsis pulmonis (strain UAB CTIP) (Mycoplasma pulmonis), this protein is Adenylate kinase.